Here is a 412-residue protein sequence, read N- to C-terminus: [Pyruvate dehydrogenase (acetyl-transferring)] kinase isozyme 4, mitochondrial (412 aa).

The 231-residue stretch at 138–368 (ILEYKDTCTV…DAIIYLKALS (231 aa)) folds into the Histidine kinase domain. Residues 254 to 261 (ELFKNAMR), Asp-293, 312 to 313 (ST), and 329 to 334 (GFGYGL) each bind ATP.

The protein belongs to the PDK/BCKDK protein kinase family. As to quaternary structure, homodimer. Interacts with the pyruvate dehydrogenase complex subunit DLAT, and is part of the multimeric pyruvate dehydrogenase complex that contains multiple copies of pyruvate dehydrogenase (E1), dihydrolipoamide acetyltransferase (DLAT, E2) and lipoamide dehydrogenase (DLD, E3).

It is found in the mitochondrion matrix. The enzyme catalyses L-seryl-[pyruvate dehydrogenase E1 alpha subunit] + ATP = O-phospho-L-seryl-[pyruvate dehydrogenase E1 alpha subunit] + ADP + H(+). Its function is as follows. Kinase that plays a key role in regulation of glucose and fatty acid metabolism and homeostasis via phosphorylation of the pyruvate dehydrogenase subunits PDHA1 and PDHA2. This inhibits pyruvate dehydrogenase activity, and thereby regulates metabolite flux through the tricarboxylic acid cycle, down-regulates aerobic respiration and inhibits the formation of acetyl-coenzyme A from pyruvate. Inhibition of pyruvate dehydrogenase decreases glucose utilization and increases fat metabolism in response to prolonged fasting and starvation. Plays an important role in maintaining normal blood glucose levels under starvation, and is involved in the insulin signaling cascade. Via its regulation of pyruvate dehydrogenase activity, plays an important role in maintaining normal blood pH and in preventing the accumulation of ketone bodies under starvation. In the fed state, mediates cellular responses to glucose levels and to a high-fat diet. Regulates both fatty acid oxidation and de novo fatty acid biosynthesis. Plays a role in the generation of reactive oxygen species. Protects detached epithelial cells against anoikis. Plays a role in cell proliferation via its role in regulating carbohydrate and fatty acid metabolism. This is [Pyruvate dehydrogenase (acetyl-transferring)] kinase isozyme 4, mitochondrial (Pdk4) from Mus musculus (Mouse).